The sequence spans 145 residues: D-aminoacyl-tRNA deacylase (145 aa).

Residues glycine 137–proline 138 carry the Gly-cisPro motif, important for rejection of L-amino acids motif.

This sequence belongs to the DTD family. In terms of assembly, homodimer.

Its subcellular location is the cytoplasm. The catalysed reaction is glycyl-tRNA(Ala) + H2O = tRNA(Ala) + glycine + H(+). The enzyme catalyses a D-aminoacyl-tRNA + H2O = a tRNA + a D-alpha-amino acid + H(+). Functionally, an aminoacyl-tRNA editing enzyme that deacylates mischarged D-aminoacyl-tRNAs. Also deacylates mischarged glycyl-tRNA(Ala), protecting cells against glycine mischarging by AlaRS. Acts via tRNA-based rather than protein-based catalysis; rejects L-amino acids rather than detecting D-amino acids in the active site. By recycling D-aminoacyl-tRNA to D-amino acids and free tRNA molecules, this enzyme counteracts the toxicity associated with the formation of D-aminoacyl-tRNA entities in vivo and helps enforce protein L-homochirality. This chain is D-aminoacyl-tRNA deacylase, found in Shewanella amazonensis (strain ATCC BAA-1098 / SB2B).